We begin with the raw amino-acid sequence, 82 residues long: MTFSADDINQTLDASGLRCPEPVMMVRKTVRLMQEGETLLVIADDPATVRDIPSFCRFMDHTLLASDTEQPPYRYLIRKGLN.

Residue C19 is the Cysteine persulfide intermediate of the active site.

Belongs to the sulfur carrier protein TusA family.

The protein resides in the cytoplasm. Functionally, sulfur carrier protein which probably makes part of a sulfur-relay system. This is Sulfur carrier protein TusA from Tolumonas auensis (strain DSM 9187 / NBRC 110442 / TA 4).